The primary structure comprises 143 residues: Nucleoside diphosphate kinase (143 aa).

Residues Lys-11, Phe-59, Arg-87, Thr-93, Arg-104, and Asn-114 each contribute to the ATP site. The active-site Pros-phosphohistidine intermediate is His-117.

Belongs to the NDK family. In terms of assembly, homotetramer. Requires Mg(2+) as cofactor.

The protein localises to the cytoplasm. The catalysed reaction is a 2'-deoxyribonucleoside 5'-diphosphate + ATP = a 2'-deoxyribonucleoside 5'-triphosphate + ADP. It carries out the reaction a ribonucleoside 5'-diphosphate + ATP = a ribonucleoside 5'-triphosphate + ADP. Its function is as follows. Major role in the synthesis of nucleoside triphosphates other than ATP. The ATP gamma phosphate is transferred to the NDP beta phosphate via a ping-pong mechanism, using a phosphorylated active-site intermediate. This Pseudoalteromonas atlantica (strain T6c / ATCC BAA-1087) protein is Nucleoside diphosphate kinase.